Reading from the N-terminus, the 233-residue chain is Ribosome maturation factor RimM (233 aa).

The interval Met1–Glu51 is disordered. Residues Gly11–Gly28 show a composition bias toward gly residues. The PRC barrel domain maps to Gly145 to Leu226.

The protein belongs to the RimM family. As to quaternary structure, binds ribosomal protein uS19.

It localises to the cytoplasm. In terms of biological role, an accessory protein needed during the final step in the assembly of 30S ribosomal subunit, possibly for assembly of the head region. Essential for efficient processing of 16S rRNA. May be needed both before and after RbfA during the maturation of 16S rRNA. It has affinity for free ribosomal 30S subunits but not for 70S ribosomes. The sequence is that of Ribosome maturation factor RimM from Trichormus variabilis (strain ATCC 29413 / PCC 7937) (Anabaena variabilis).